We begin with the raw amino-acid sequence, 273 residues long: Tryptophan synthase alpha chain (273 aa).

Catalysis depends on proton acceptor residues E56 and D67.

It belongs to the TrpA family. As to quaternary structure, tetramer of two alpha and two beta chains.

It catalyses the reaction (1S,2R)-1-C-(indol-3-yl)glycerol 3-phosphate + L-serine = D-glyceraldehyde 3-phosphate + L-tryptophan + H2O. The protein operates within amino-acid biosynthesis; L-tryptophan biosynthesis; L-tryptophan from chorismate: step 5/5. In terms of biological role, the alpha subunit is responsible for the aldol cleavage of indoleglycerol phosphate to indole and glyceraldehyde 3-phosphate. This chain is Tryptophan synthase alpha chain, found in Shewanella baltica (strain OS185).